The following is a 299-amino-acid chain: Tyrosine recombinase XerC (299 aa).

In terms of domain architecture, Core-binding (CB) spans 1–85; the sequence is MEQHLDAYCM…AVRGFYKYLN (85 aa). In terms of domain architecture, Tyr recombinase spans 106–285; sequence RLPKTLDTDR…DFQHLATVYD (180 aa). Residues arginine 146, lysine 170, histidine 237, arginine 240, and histidine 263 contribute to the active site. Tyrosine 272 serves as the catalytic O-(3'-phospho-DNA)-tyrosine intermediate.

It belongs to the 'phage' integrase family. XerC subfamily. In terms of assembly, forms a cyclic heterotetrameric complex composed of two molecules of XerC and two molecules of XerD.

It is found in the cytoplasm. In terms of biological role, site-specific tyrosine recombinase, which acts by catalyzing the cutting and rejoining of the recombining DNA molecules. The XerC-XerD complex is essential to convert dimers of the bacterial chromosome into monomers to permit their segregation at cell division. It also contributes to the segregational stability of plasmids. The protein is Tyrosine recombinase XerC of Pseudomonas savastanoi pv. phaseolicola (strain 1448A / Race 6) (Pseudomonas syringae pv. phaseolicola (strain 1448A / Race 6)).